A 102-amino-acid chain; its full sequence is NADH-quinone oxidoreductase subunit K 2 (102 aa).

Helical transmembrane passes span 5-25 (FEHV…CVLV), 30-50 (LIML…AFVG), and 65-85 (LIIM…VVYL).

The protein belongs to the complex I subunit 4L family. NDH-1 is composed of 14 different subunits. Subunits NuoA, H, J, K, L, M, N constitute the membrane sector of the complex.

The protein localises to the cell inner membrane. The enzyme catalyses a quinone + NADH + 5 H(+)(in) = a quinol + NAD(+) + 4 H(+)(out). Its function is as follows. NDH-1 shuttles electrons from NADH, via FMN and iron-sulfur (Fe-S) centers, to quinones in the respiratory chain. The immediate electron acceptor for the enzyme in this species is believed to be ubiquinone. Couples the redox reaction to proton translocation (for every two electrons transferred, four hydrogen ions are translocated across the cytoplasmic membrane), and thus conserves the redox energy in a proton gradient. The sequence is that of NADH-quinone oxidoreductase subunit K 2 from Geobacter sulfurreducens (strain ATCC 51573 / DSM 12127 / PCA).